A 647-amino-acid chain; its full sequence is Threonine--tRNA ligase (647 aa).

Residues 1 to 61 enclose the TGS domain; sequence MIKITFPDGA…EEDGSIEIVT (61 aa). The interval 240–538 is catalytic; that stretch reads DHRKLGKELD…LIETYKGAFP (299 aa). Zn(2+)-binding residues include Cys334, His385, and His515.

Belongs to the class-II aminoacyl-tRNA synthetase family. Homodimer. Zn(2+) is required as a cofactor.

The protein localises to the cytoplasm. The enzyme catalyses tRNA(Thr) + L-threonine + ATP = L-threonyl-tRNA(Thr) + AMP + diphosphate + H(+). Functionally, catalyzes the attachment of threonine to tRNA(Thr) in a two-step reaction: L-threonine is first activated by ATP to form Thr-AMP and then transferred to the acceptor end of tRNA(Thr). Also edits incorrectly charged L-seryl-tRNA(Thr). This Streptococcus pyogenes serotype M4 (strain MGAS10750) protein is Threonine--tRNA ligase.